The sequence spans 199 residues: Inner membrane-spanning protein YciB (199 aa).

Helical transmembrane passes span 3-23 (LLIDFFPIILFFVAFKVWGIY), 47-67 (VEPMQWVSLGVIVLFGGATLL), 76-96 (WKPSVLYWLMGSALLIGQLVF), 119-139 (LNWSWAAFFAVMGALNLVIAY), and 149-169 (FKLFGGMGLMLVFVIGQAIYM). Residues 180-199 (AAAATPDALPPPGVQQDKQP) are disordered.

It belongs to the YciB family.

Its subcellular location is the cell inner membrane. Its function is as follows. Plays a role in cell envelope biogenesis, maintenance of cell envelope integrity and membrane homeostasis. This chain is Inner membrane-spanning protein YciB, found in Delftia acidovorans (strain DSM 14801 / SPH-1).